The chain runs to 1147 residues: uncharacterized protein (1147 aa).

7 disordered regions span residues F226 to D245, I255 to A297, S431 to I617, E647 to R670, H705 to Q945, R1003 to K1032, and Y1060 to Q1090. Basic and acidic residues predominate over residues W268–K296. Over residues S431–R441 the composition is skewed to basic residues. Low complexity predominate over residues P538–A549. The span at L584 to L603 shows a compositional bias: polar residues. A compositionally biased stretch (polar residues) spans N743–N752. A coiled-coil region spans residues N743–L804. Over residues T768–S802 the composition is skewed to basic and acidic residues. Residues K807–R819 show a composition bias toward basic residues. The span at S870 to A884 shows a compositional bias: polar residues. Positions D895–Q945 are enriched in basic and acidic residues. A coiled-coil region spans residues V907–H1112.

This is an uncharacterized protein from Bos taurus (Bovine).